The primary structure comprises 229 residues: Heptaprenylglyceryl phosphate synthase (229 aa).

Residue Lys-12 participates in sn-glycerol 1-phosphate binding. Mg(2+) is bound by residues Asp-14 and Thr-40. Residues 159–164 (YIEYSG), Gly-189, and 209–210 (GN) contribute to the sn-glycerol 1-phosphate site.

The protein belongs to the GGGP/HepGP synthase family. Group I subfamily. Homodimer. The cofactor is Mg(2+).

The catalysed reaction is sn-glycerol 1-phosphate + all-trans-heptaprenyl diphosphate = 3-heptaprenyl-sn-glycero-1-phosphate + diphosphate. Its pathway is membrane lipid metabolism; glycerophospholipid metabolism. Its function is as follows. Prenyltransferase that catalyzes in vivo the transfer of the heptaprenyl moiety of heptaprenyl pyrophosphate (HepPP; 35 carbon atoms) to the C3 hydroxyl of sn-glycerol-1-phosphate (G1P), producing heptaprenylglyceryl phosphate (HepGP). This reaction is an ether-bond-formation step in the biosynthesis of archaea-type G1P-based membrane lipids found in Bacillales. This is Heptaprenylglyceryl phosphate synthase from Staphylococcus saprophyticus subsp. saprophyticus (strain ATCC 15305 / DSM 20229 / NCIMB 8711 / NCTC 7292 / S-41).